A 202-amino-acid chain; its full sequence is Putative transposon Tn552 DNA-invertase bin3 (202 aa).

The Resolvase/invertase-type recombinase catalytic domain occupies 1 to 143 (MIIGYARVSS…QGIQVAKEKG (143 aa)). The O-(5'-phospho-DNA)-serine intermediate role is filled by Ser9.

This sequence belongs to the site-specific recombinase resolvase family.

Its function is as follows. Potential DNA invertase. This is Putative transposon Tn552 DNA-invertase bin3 (bin3) from Staphylococcus aureus.